The chain runs to 276 residues: uncharacterized protein (276 aa).

The region spanning 20–137 is the AB hydrolase-1 domain; it reads PVLIFIPGAN…PPINTFLPDS (118 aa). The disordered stretch occupies residues 57–76; it reads GESELTEPLPDSASNPDSDY.

Belongs to the AB hydrolase superfamily.

This is an uncharacterized protein from Staphylococcus aureus (strain bovine RF122 / ET3-1).